A 282-amino-acid polypeptide reads, in one-letter code: Blarina toxin (282 aa).

A signal peptide spans 1–17; it reads MCFLLLCLTLTLAGTGA. Positions 18–29 are cleaved as a propeptide — activation peptide; that stretch reads VPTGPSIEIHSR. The region spanning 30 to 279 is the Peptidase S1 domain; sequence IIGGWECDKH…YISWIQETIK (250 aa). 5 cysteine pairs are disulfide-bonded: Cys-36–Cys-194, Cys-57–Cys-73, Cys-170–Cys-240, Cys-205–Cys-219, and Cys-230–Cys-255. Residue His-72 is the Charge relay system of the active site. O-linked (GalNAc...) serine glycosylation is present at Ser-100. 2 N-linked (GlcNAc...) asparagine glycosylation sites follow: Asn-109 and Asn-122. The active-site Charge relay system is Asp-138. Residue Ser-234 is the Charge relay system of the active site.

Belongs to the peptidase S1 family. Kallikrein subfamily. In terms of tissue distribution, submaxillary and sublingual salivary glands.

The protein resides in the secreted. With respect to regulation, strongly inhibited by aprotinin, moderately inhibited by secretory leukoprotease inhibitor, the Kunitz-type soybean trypsin inhibitor, and leupeptin, and not inhibited by urinary trypsin inhibitor or alpha-1 protease inhibitor. In terms of biological role, has kallikrein-like activity, converts kininogens to kinins, and has dilatory effects on the blood vessel walls. Shows highest activity toward Pro-Phe-Arg-MCA and Boc-Val-Leu-Lys-MCA in vitro. Has preference for Arg and Lys in position P1 and hydrophobic residues in position P2. The chain is Blarina toxin (BTX) from Blarina brevicauda (Northern short-tailed shrew).